Here is a 670-residue protein sequence, read N- to C-terminus: Rhophilin-1 (670 aa).

Residues 1 to 20 (MILEERPDGAGAGEESPRLQ) are disordered. Residues 23–97 (DSLTQIQCGQ…LEELSGGVDP (75 aa)) enclose the REM-1 domain. S24 is modified (phosphoserine). The 350-residue stretch at 108 to 457 (PMIPLGLKET…LAKYAELDRE (350 aa)) folds into the BRO1 domain. Residues 513-592 (PVHLTRGEGG…ASLQVVSLLP (80 aa)) enclose the PDZ domain. The tract at residues 616-670 (QREHGCKTPASTWASPRPLLNWSRKAQQGKTGGCPQPCAPVKPAPPSSLKHPGWP) is disordered. Pro residues predominate over residues 652–661 (PCAPVKPAPP).

The protein belongs to the RHPN family. In terms of assembly, binds specifically to GTP-Rho. Interacts with ROPN1.

In terms of biological role, has no enzymatic activity. May serve as a target for Rho, and interact with some cytoskeletal component upon Rho binding or relay a Rho signal to other molecules. The chain is Rhophilin-1 from Homo sapiens (Human).